Reading from the N-terminus, the 412-residue chain is Argininosuccinate synthase (412 aa).

10-18 (AYSGGLDTS) contacts ATP. L-citrulline is bound at residue Y89. Residue G119 coordinates ATP. T121, N125, and D126 together coordinate L-aspartate. N125 contacts L-citrulline. R129, S177, E261, and Y273 together coordinate L-citrulline.

This sequence belongs to the argininosuccinate synthase family. Type 1 subfamily. Homotetramer.

The protein localises to the cytoplasm. It carries out the reaction L-citrulline + L-aspartate + ATP = 2-(N(omega)-L-arginino)succinate + AMP + diphosphate + H(+). It functions in the pathway amino-acid biosynthesis; L-arginine biosynthesis; L-arginine from L-ornithine and carbamoyl phosphate: step 2/3. This Bifidobacterium longum (strain NCC 2705) protein is Argininosuccinate synthase.